The sequence spans 101 residues: Urease subunit beta (101 aa).

This sequence belongs to the urease beta subunit family. In terms of assembly, heterotrimer of UreA (gamma), UreB (beta) and UreC (alpha) subunits. Three heterotrimers associate to form the active enzyme.

The protein localises to the cytoplasm. It carries out the reaction urea + 2 H2O + H(+) = hydrogencarbonate + 2 NH4(+). Its pathway is nitrogen metabolism; urea degradation; CO(2) and NH(3) from urea (urease route): step 1/1. This chain is Urease subunit beta, found in Agrobacterium fabrum (strain C58 / ATCC 33970) (Agrobacterium tumefaciens (strain C58)).